Reading from the N-terminus, the 182-residue chain is ATP synthase subunit b, chloroplastic (182 aa).

The chain crosses the membrane as a helical span at residues 36–56 (ILLLLLGLMYVLKEFLGSILV).

Belongs to the ATPase B chain family. As to quaternary structure, F-type ATPases have 2 components, F(1) - the catalytic core - and F(0) - the membrane proton channel. F(1) has five subunits: alpha(3), beta(3), gamma(1), delta(1), epsilon(1). F(0) has four main subunits: a(1), b(1), b'(1) and c(10-14). The alpha and beta chains form an alternating ring which encloses part of the gamma chain. F(1) is attached to F(0) by a central stalk formed by the gamma and epsilon chains, while a peripheral stalk is formed by the delta, b and b' chains.

It localises to the plastid. The protein resides in the chloroplast thylakoid membrane. F(1)F(0) ATP synthase produces ATP from ADP in the presence of a proton or sodium gradient. F-type ATPases consist of two structural domains, F(1) containing the extramembraneous catalytic core and F(0) containing the membrane proton channel, linked together by a central stalk and a peripheral stalk. During catalysis, ATP synthesis in the catalytic domain of F(1) is coupled via a rotary mechanism of the central stalk subunits to proton translocation. In terms of biological role, component of the F(0) channel, it forms part of the peripheral stalk, linking F(1) to F(0). The sequence is that of ATP synthase subunit b, chloroplastic from Gracilaria tenuistipitata var. liui (Red alga).